The sequence spans 902 residues: HTH-type transcriptional regulator MalT (902 aa).

39–46 is an ATP binding site; sequence SPAGYGKT. Residues 830-895 form the HTH luxR-type domain; the sequence is ELIRTSPLTQ…DAVQHAQQLL (66 aa). The H-T-H motif DNA-binding region spans 854–873; sequence NEQIAGELAVAATTIKTHIR.

It belongs to the MalT family. Monomer in solution. Oligomerizes to an active state in the presence of the positive effectors ATP and maltotriose.

Activated by ATP and maltotriose, which are both required for DNA binding. Its function is as follows. Positively regulates the transcription of the maltose regulon whose gene products are responsible for uptake and catabolism of malto-oligosaccharides. Specifically binds to the promoter region of its target genes, recognizing a short DNA motif called the MalT box. The polypeptide is HTH-type transcriptional regulator MalT (Salmonella dublin (strain CT_02021853)).